We begin with the raw amino-acid sequence, 190 residues long: Probable molybdenum cofactor guanylyltransferase (190 aa).

GTP contacts are provided by residues 9 to 11 (LCG), lysine 21, aspartate 65, and aspartate 94. Aspartate 94 is a Mg(2+) binding site.

Belongs to the MobA family. Mg(2+) is required as a cofactor.

It localises to the cytoplasm. The enzyme catalyses Mo-molybdopterin + GTP + H(+) = Mo-molybdopterin guanine dinucleotide + diphosphate. In terms of biological role, transfers a GMP moiety from GTP to Mo-molybdopterin (Mo-MPT) cofactor (Moco or molybdenum cofactor) to form Mo-molybdopterin guanine dinucleotide (Mo-MGD) cofactor. The protein is Probable molybdenum cofactor guanylyltransferase of Flavobacterium johnsoniae (strain ATCC 17061 / DSM 2064 / JCM 8514 / BCRC 14874 / CCUG 350202 / NBRC 14942 / NCIMB 11054 / UW101) (Cytophaga johnsonae).